Reading from the N-terminus, the 325-residue chain is D-xylose 1-dehydrogenase (NADP(+)) 2 (325 aa).

An N-terminal signal peptide occupies residues 1–22 (MMFGILGTAGIGVKSVIPAVQA).

It belongs to the Gfo/Idh/MocA family. As to quaternary structure, homotetramer.

The protein localises to the secreted. It catalyses the reaction D-xylose + NADP(+) = D-xylono-1,5-lactone + NADPH + H(+). NADP-dependent D-xylose dehydrogenase involved in the degradation of D-xylose, a major component of hemicelluloses such as xylan. Even if it shows D-xylose dehydrogenase activity, it is not essential for D-xylose degradation. The polypeptide is D-xylose 1-dehydrogenase (NADP(+)) 2 (Haloferax volcanii (strain ATCC 29605 / DSM 3757 / JCM 8879 / NBRC 14742 / NCIMB 2012 / VKM B-1768 / DS2) (Halobacterium volcanii)).